Reading from the N-terminus, the 103-residue chain is Large ribosomal subunit protein bL21 (103 aa).

It belongs to the bacterial ribosomal protein bL21 family. In terms of assembly, part of the 50S ribosomal subunit. Contacts protein L20.

In terms of biological role, this protein binds to 23S rRNA in the presence of protein L20. The polypeptide is Large ribosomal subunit protein bL21 (Shewanella baltica (strain OS223)).